A 199-amino-acid chain; its full sequence is Large ribosomal subunit protein bL17 (199 aa).

The tract at residues 123 to 199 is disordered; that stretch reads DEANRARRAA…EESEAKDDTK (77 aa). The segment covering 137–152 has biased composition (basic and acidic residues); that stretch reads KADERADEKADEKAEE. The segment covering 153 to 199 has biased composition (acidic residues); it reads TVEETTEAPAEESTEAAAEETVEETTEAPAEESTEAAEESEAKDDTK.

This sequence belongs to the bacterial ribosomal protein bL17 family. As to quaternary structure, part of the 50S ribosomal subunit. Contacts protein L32.

In Mycolicibacterium smegmatis (strain ATCC 700084 / mc(2)155) (Mycobacterium smegmatis), this protein is Large ribosomal subunit protein bL17.